Reading from the N-terminus, the 352-residue chain is Maleylacetate reductase (352 aa).

It belongs to the iron-containing alcohol dehydrogenase family.

It carries out the reaction 3-oxoadipate + NAD(+) = maleylacetate + NADH + H(+). It catalyses the reaction 3-oxoadipate + NADP(+) = maleylacetate + NADPH + H(+). It functions in the pathway xenobiotic degradation; (2,4,5-trichlorophenoxy)acetate degradation. In Burkholderia cepacia (Pseudomonas cepacia), this protein is Maleylacetate reductase (tftE).